The sequence spans 95 residues: Nodulin (95 aa).

This is Nodulin from Striga hermonthica (Purple witchweed).